The following is a 394-amino-acid chain: Ceramide glucosyltransferase (394 aa).

Topologically, residues 1–10 (MAVLDLALQG) are lumenal. Residues 11–32 (LAIFGCVLFFVLWFMHFLSIVY) form a helical membrane-spanning segment. At 33–195 (TRLHLNKKVS…QVYFGTSHPR (163 aa)) the chain is on the cytoplasmic side. Asp-92 is a short sequence motif (D1). Asp-144 is a short sequence motif (D2). Residues 196–215 (SYISANVTGFKCVTGMSCLM) form a helical membrane-spanning segment. Residues 216–287 (RKEVLDQAGG…KLRINMLPAT (72 aa)) lie on the Lumenal side of the membrane. Position 236 (Asp-236) is a short sequence motif, D3. Asp-236 (proton acceptor) is an active-site residue. Residues 272–276 (RMIRW) carry the (Q/R)XXRW motif. A helical transmembrane segment spans residues 288-304 (IICEPISECFVASLIIG). Over 305-309 (WAAHH) the chain is Cytoplasmic. Residues 310–328 (IFRWDIMVFFMCHCLAWFI) traverse the membrane as a helical segment. The Lumenal segment spans residues 329 to 348 (FDYIQLRGVQGGPLNFSKLD). A helical transmembrane segment spans residues 349 to 369 (YAVAWFIRESMTIYIFLSALW). The Cytoplasmic segment spans residues 370 to 394 (DPTISWRTGRYRLRCGGTAEEILDV).

Belongs to the glycosyltransferase 2 family.

It is found in the golgi apparatus membrane. It catalyses the reaction an N-acylsphing-4-enine + UDP-alpha-D-glucose = a beta-D-glucosyl-(1&lt;-&gt;1')-N-acylsphing-4-enine + UDP + H(+). It carries out the reaction UDP-alpha-D-xylose + an N-acylsphing-4-enine = a beta-D-xylosyl-(1&lt;-&gt;1')-N-acylsphing-4-enine + UDP + H(+). The catalysed reaction is N-(9Z-octadecenoyl)-sphing-4-enine + UDP-alpha-D-xylose = beta-D-xylosyl-(1&lt;-&gt;1')-N-(9Z-octadecenoyl)-sphing-4-enine + UDP + H(+). The protein operates within lipid metabolism; sphingolipid metabolism. Participates in the initial step of the glucosylceramide-based glycosphingolipid/GSL synthetic pathway at the cytosolic surface of the Golgi. Catalyzes the transfer of glucose from UDP-glucose to ceramide to produce glucosylceramide/GlcCer (such as beta-D-glucosyl-(1&lt;-&gt;1')-N-acylsphing-4-enine). Glucosylceramide is the core component of glycosphingolipids/GSLs, amphipathic molecules consisting of a ceramide lipid moiety embedded in the outer leaflet of the membrane, linked to one of hundreds of different externally oriented oligosaccharide structures. Glycosphingolipids are essential components of membrane microdomains that mediate membrane trafficking and signal transduction. They are implicated in many fundamental cellular processes, including growth, differentiation, migration, morphogenesis, cell-to-cell and cell-to-matrix interactions. Catalyzes the synthesis of xylosylceramide/XylCer (such as beta-D-xylosyl-(1&lt;-&gt;1')-N-acylsphing-4-enine) using UDP-Xyl as xylose donor. In Xenopus tropicalis (Western clawed frog), this protein is Ceramide glucosyltransferase (ugcg).